We begin with the raw amino-acid sequence, 652 residues long: p-hydroxybenzoic acid efflux pump subunit AaeB (652 aa).

11 helical membrane-spanning segments follow: residues 8 to 28 (FPIK…HFNL), 34 to 54 (AVMT…GDPF), 64 to 84 (LRII…IATI), 88 to 108 (ALMM…SSLI), 118 to 138 (LAGY…SVLL), 149 to 169 (EIII…PRSV), 367 to 387 (LFWL…LAVI), 404 to 424 (FLYG…VIMP), 429 to 449 (SMLL…ILIQ), 453 to 473 (IGTL…NPMT), and 480 to 500 (LDNA…ILLI).

The protein belongs to the aromatic acid exporter ArAE (TC 2.A.85) family.

The protein localises to the cell inner membrane. Forms an efflux pump with AaeA. Could function as a metabolic relief valve, allowing to eliminate certain compounds when they accumulate to high levels in the cell. In Erwinia billingiae (strain Eb661), this protein is p-hydroxybenzoic acid efflux pump subunit AaeB.